An 82-amino-acid chain; its full sequence is Small ribosomal subunit protein bS18 (82 aa).

This sequence belongs to the bacterial ribosomal protein bS18 family. In terms of assembly, part of the 30S ribosomal subunit. Forms a tight heterodimer with protein bS6.

Binds as a heterodimer with protein bS6 to the central domain of the 16S rRNA, where it helps stabilize the platform of the 30S subunit. This Methylobacterium nodulans (strain LMG 21967 / CNCM I-2342 / ORS 2060) protein is Small ribosomal subunit protein bS18.